Here is a 443-residue protein sequence, read N- to C-terminus: Probable D-serine dehydratase (443 aa).

K106 carries the post-translational modification N6-(pyridoxal phosphate)lysine.

Belongs to the serine/threonine dehydratase family. DsdA subfamily. Requires pyridoxal 5'-phosphate as cofactor.

It carries out the reaction D-serine = pyruvate + NH4(+). This Cupriavidus pinatubonensis (strain JMP 134 / LMG 1197) (Cupriavidus necator (strain JMP 134)) protein is Probable D-serine dehydratase.